The primary structure comprises 423 residues: Probable electron transfer flavoprotein-quinone oxidoreductase YgcN (423 aa).

7 to 21 (IIIIGAGIAGTACAL) is an FAD binding site.

Belongs to the ETF-QO/FixC family. It depends on FAD as a cofactor.

In terms of biological role, probably accepts electrons from YgcQ/YgcR and reduces a quinone. In Escherichia coli (strain K12), this protein is Probable electron transfer flavoprotein-quinone oxidoreductase YgcN (ygcN).